The sequence spans 347 residues: Phosphoribosylformylglycinamidine cyclo-ligase (347 aa).

It belongs to the AIR synthase family.

The protein resides in the cytoplasm. The enzyme catalyses 2-formamido-N(1)-(5-O-phospho-beta-D-ribosyl)acetamidine + ATP = 5-amino-1-(5-phospho-beta-D-ribosyl)imidazole + ADP + phosphate + H(+). It participates in purine metabolism; IMP biosynthesis via de novo pathway; 5-amino-1-(5-phospho-D-ribosyl)imidazole from N(2)-formyl-N(1)-(5-phospho-D-ribosyl)glycinamide: step 2/2. The protein is Phosphoribosylformylglycinamidine cyclo-ligase of Yersinia enterocolitica serotype O:8 / biotype 1B (strain NCTC 13174 / 8081).